Consider the following 411-residue polypeptide: Tetra-peptide repeat homeobox protein 1 (411 aa).

Residues 3–24 (SLREQQLQVWFKNRRAKLARER) constitute a DNA-binding region (homeobox). Disordered regions lie at residues 20–63 (LARE…SGIL), 88–246 (IPAA…ISGP), 286–340 (PILS…SPDA), and 363–411 (LEGS…LLDL). Low complexity predominate over residues 27–55 (QQQPQRVPGQRGRGARAAPLVPAASASAP). 2 stretches are compositionally biased toward pro residues: residues 95 to 139 (GPGP…PGPI) and 149 to 246 (FRGP…ISGP). The segment covering 295–307 (SPGSLPGLAPILG) has biased composition (low complexity). Over residues 319–335 (APIPGPGSLPAPAPLWP) the composition is skewed to pro residues. Polar residues-rich tracts occupy residues 366 to 376 (SSVSTMTSQYQ) and 388 to 402 (GSQP…NENH).

It belongs to the paired homeobox family.

It is found in the nucleus. In terms of biological role, transcription factor expressed after fertilization required for zygotic genome activation (ZGA), a critical event in early embryonic development during which the developmental control passes from maternally provided mRNAs to the expression of the zygotic genome after fertilization. Binds and activates expression of key ZGA marker genes, such as NANOGNB, ZSCAN4, DUXB, KLF5 and DPPA3. Binds to regulatory DNA sequences containing a 5'-TAATCC-3' sequence motif. The chain is Tetra-peptide repeat homeobox protein 1 from Homo sapiens (Human).